The following is a 163-amino-acid chain: Nucleotide-binding protein CJJ81176_0398 (163 aa).

Belongs to the YajQ family.

Its function is as follows. Nucleotide-binding protein. The chain is Nucleotide-binding protein CJJ81176_0398 from Campylobacter jejuni subsp. jejuni serotype O:23/36 (strain 81-176).